The chain runs to 413 residues: Serine hydroxymethyltransferase (413 aa).

Residues L115 and 119 to 121 contribute to the (6S)-5,6,7,8-tetrahydrofolate site; that span reads GHL. K224 is subject to N6-(pyridoxal phosphate)lysine.

Belongs to the SHMT family. In terms of assembly, homodimer. The cofactor is pyridoxal 5'-phosphate.

It is found in the cytoplasm. It catalyses the reaction (6R)-5,10-methylene-5,6,7,8-tetrahydrofolate + glycine + H2O = (6S)-5,6,7,8-tetrahydrofolate + L-serine. The protein operates within one-carbon metabolism; tetrahydrofolate interconversion. Its pathway is amino-acid biosynthesis; glycine biosynthesis; glycine from L-serine: step 1/1. Its function is as follows. Catalyzes the reversible interconversion of serine and glycine with tetrahydrofolate (THF) serving as the one-carbon carrier. This reaction serves as the major source of one-carbon groups required for the biosynthesis of purines, thymidylate, methionine, and other important biomolecules. Also exhibits THF-independent aldolase activity toward beta-hydroxyamino acids, producing glycine and aldehydes, via a retro-aldol mechanism. The chain is Serine hydroxymethyltransferase from Mycoplasma capricolum subsp. capricolum (strain California kid / ATCC 27343 / NCTC 10154).